The primary structure comprises 135 residues: Transcriptional activator protein (135 aa).

A Nuclear localization signal motif is present at residues 17 to 32; sequence KIQHHIAKKRQVRRRR. A zinc finger lies at 37–54; the sequence is CGCSYYIHLDCINHGFTH. The interval 120-135 is transactivation; the sequence is HLDDLTVSDWSFFKSL.

This sequence belongs to the geminiviridae transcriptional activator protein family. Monomer. Homodimer. Homooligomer. Self-interaction correlates with nuclear localization and efficient activation of transcription. Monomers suppress local silencing by interacting with and inactivating host adenosine kinase 2 (ADK2) in the cytoplasm. Interacts with and inhibits host SNF1 kinase. Binds to ssDNA. May interact with host RPS27A. Post-translationally, phosphorylated.

Its subcellular location is the host nucleus. The protein localises to the host cytoplasm. In terms of biological role, multifunctional protein that modulates host antiviral defenses and promotes host attractiveness to insect vectors. Acts as a suppressor of RNA-mediated gene silencing, also known as post-transcriptional gene silencing (PTGS), a mechanism of plant viral defense that limits the accumulation of viral RNAs. TrAP suppresses the host RNA silencing by inhibiting adenosine kinase 2 (ADK2), a kinase involved in a general methylation pathway. Also suppresses the host basal defense by interacting with and inhibiting SNF1 kinase, a key regulator of cell metabolism implicated in innate antiviral defense. Its function is as follows. Inhibits signal transduction by the phytohormone jasmonate, making the infected plant more attractive to aphids, which are the second host to play a role as a dissemination vector. Acts by binding to ubiquitin precursor RPS27A, thereby preventing ubiquitin degradation of JAZ. The polypeptide is Transcriptional activator protein (Tomato yellow leaf curl Sardinia virus (isolate Spain-1) (TYLCSV)).